The following is a 442-amino-acid chain: Probable glycine dehydrogenase (decarboxylating) subunit 1 (442 aa).

It belongs to the GcvP family. N-terminal subunit subfamily. In terms of assembly, the glycine cleavage system is composed of four proteins: P, T, L and H. In this organism, the P 'protein' is a heterodimer of two subunits.

The enzyme catalyses N(6)-[(R)-lipoyl]-L-lysyl-[glycine-cleavage complex H protein] + glycine + H(+) = N(6)-[(R)-S(8)-aminomethyldihydrolipoyl]-L-lysyl-[glycine-cleavage complex H protein] + CO2. In terms of biological role, the glycine cleavage system catalyzes the degradation of glycine. The P protein binds the alpha-amino group of glycine through its pyridoxal phosphate cofactor; CO(2) is released and the remaining methylamine moiety is then transferred to the lipoamide cofactor of the H protein. This is Probable glycine dehydrogenase (decarboxylating) subunit 1 from Geotalea uraniireducens (strain Rf4) (Geobacter uraniireducens).